The sequence spans 1031 residues: MMS19 nucleotide excision repair protein homolog (1031 aa).

Ala2 is modified (N-acetylalanine). HEAT repeat units follow at residues 867–905, 909–947, 950–988, and 991–1029; these read QRFF…RLPK, LPEL…EAPQ, SLHV…LPTS, and LPYK…LGSP. Ser1028 is modified (phosphoserine).

This sequence belongs to the MET18/MMS19 family. In terms of assembly, component of the CIA complex. In the CIA complex, interacts directly with CIAO2B and CIAO3. Component of the MMXD complex, composed of CIAO1, ERCC2, CIAO2B, MMS19 and SLC25A5. Interacts with CIAO2B; the interaction is direct. Interacts with ERCC2/XPD; the interaction is direct. Interacts with ERCC3/XPB and NCOA3/RAC3. Interacts with RTEL1; the interaction mediates the association of RTEL1 with the CIA complex. Interacts with BRIP1. Interacts with KIF4A; the interaction facilitates the transfer of Fe-S clusters to KIF4A to ensure proper localization of KIF4A to the mitotic machinery components. Interacts with CCDC117; the interaction is indirect. Post-translationally, ubiquitinated; undergoes 'Lys-48'-linked polyubiquitination. In terms of tissue distribution, ubiquitously expressed with higher expression in testis.

It is found in the nucleus. The protein localises to the cytoplasm. The protein resides in the cytoskeleton. It localises to the spindle. Functionally, key component of the cytosolic iron-sulfur protein assembly (CIA) complex, a multiprotein complex that mediates the incorporation of iron-sulfur cluster into apoproteins specifically involved in DNA metabolism and genomic integrity. In the CIA complex, MMS19 acts as an adapter between early-acting CIA components and a subset of cellular target Fe/S proteins such as ERCC2/XPD, FANCJ and RTEL1, thereby playing a key role in nucleotide excision repair (NER), homologous recombination-mediated double-strand break DNA repair, DNA replication and RNA polymerase II (POL II) transcription. As a CIA complex component and in collaboration with CIAO1 and CIAO2, binds to and facilitates the assembly of most cytosolic-nuclear Fe/S proteins. As part of the mitotic spindle-associated MMXD complex, plays a role in chromosome segregation, probably by facilitating iron-sulfur cluster assembly into ERCC2/XPD. Together with CIAO2, facilitates the transfer of Fe-S clusters to the motor protein KIF4A, which ensures proper localization of KIF4A to mitotic machinery components to promote the progression of mitosis. Indirectly acts as a transcriptional coactivator of estrogen receptor (ER), via its role in iron-sulfur insertion into some component of the TFIIH-machinery. The sequence is that of MMS19 nucleotide excision repair protein homolog from Mus musculus (Mouse).